The primary structure comprises 84 residues: Cell division topological specificity factor (84 aa).

Belongs to the MinE family.

Its function is as follows. Prevents the cell division inhibition by proteins MinC and MinD at internal division sites while permitting inhibition at polar sites. This ensures cell division at the proper site by restricting the formation of a division septum at the midpoint of the long axis of the cell. The chain is Cell division topological specificity factor from Cupriavidus necator (strain ATCC 17699 / DSM 428 / KCTC 22496 / NCIMB 10442 / H16 / Stanier 337) (Ralstonia eutropha).